The sequence spans 743 residues: Merozoite surface protein 9 (743 aa).

A signal peptide spans 1-23 (MMNMKIVLFSLLLFVIRWNIISC). The interval 77–235 (KELLKEKQYT…VNDEDDVNDE (159 aa)) is interaction with MSP1 and host SLC4A1/Band 3. 4 disordered regions span residues 202-282 (KSQG…ATAY), 459-487 (DNQA…PTED), 512-540 (NNTP…ENFD), and 666-743 (VDAL…EESK). Residues 211–224 (SQNQNENNDNQKYQ) show a composition bias toward polar residues. 8 tandem repeats follow at residues 226 to 231 (VNDEDD), 232 to 237 (VNDEED), 238 to 243 (TNDDED), 244 to 249 (TNDEED), 250 to 255 (TNDDED), 256 to 261 (TNDDED), 262 to 267 (TNDEED), and 268 to 273 (TNDEED). The 8 X 6 AA tandem repeats of [VT]-N-D-[ED]-[ED]-D stretch occupies residues 226 to 273 (VNDEDDVNDEEDTNDDEDTNDEEDTNDDEDTNDDEDTNDEEDTNDEED). Residues 226 to 274 (VNDEDDVNDEEDTNDDEDTNDEEDTNDDEDTNDDEDTNDEEDTNDEEDH) show a composition bias toward acidic residues. Residues 364–528 (LKDNLINYEF…PPTQSKKKNK (165 aa)) are interaction with MSP1 and host SLC4A1/Band 3. A compositionally biased stretch (basic and acidic residues) spans 459–473 (DNQAVDTKSMEEPKV). Over residues 512–521 (NNTPNVVPPT) the composition is skewed to low complexity. Positions 644-733 (NQETEEEMEK…QEEEEEEEIV (90 aa)) form a coiled coil. Residues 672 to 721 (KNKEEEEKEKEKEEKEKEEKEKEKEEKEKEEKEKEEKEKEEKEEEKKEKE) show a composition bias toward basic and acidic residues. Residues 722–733 (EEQEEEEEEEIV) are compositionally biased toward acidic residues.

This sequence belongs to the plasmodium ABRA family. In terms of assembly, forms a complex composed of MSP1, MSP6, MSP7, MSP9 and MSP3; within the complex, MSP6 and MSP9 mediate the binding to the host erythrocyte. Interacts with MSP1 subunits p19 and p42; the interaction is direct. Interacts with host SLC4A1/Band 3 protein (via the 5ABC region). MSP1 subunits p19 or p42, and MSP9 form a co-ligand complex that interacts with host SLC4A1/Band 3 protein. Not glycosylated.

It is found in the cell membrane. Its subcellular location is the parasitophorous vacuole lumen. The protein localises to the secreted. Functionally, during the asexual blood stage, involved in the sialic acid-independent (SAID) merozoite invasion of host erythrocytes by binding to host SLC4A1/Band 3 protein on the surface of the host erythrocyte. This Plasmodium falciparum (isolate 3D7) protein is Merozoite surface protein 9.